An 847-amino-acid chain; its full sequence is B-cell receptor CD22 (847 aa).

A signal peptide spans 1 to 19 (MHLLGPWLLLLVLEYLAFS). The 119-residue stretch at 20–138 (DSSKWAFEHP…MERIHLNVSE (119 aa)) folds into the Ig-like V-type domain. At 20–687 (DSSKWAFEHP…YYSPETIGRR (668 aa)) the chain is on the extracellular side. N67, N101, and N112 each carry an N-linked (GlcNAc...) asparagine glycan. Position 120 (R120) interacts with N-acetylneuraminate. 3 N-linked (GlcNAc...) asparagine glycosylation sites follow: N135, N164, and N231. Ig-like C2-type domains lie at 143-235 (PHIQ…DTVQ), 242-326 (PKLE…VFLQ), 331-416 (PEPS…LDVQ), 419-500 (PKKV…VALN), 505-582 (PRDV…QTAS), and 593-676 (PRRL…STLT). Residues C161 and C219 are joined by a disulfide bond. Cystine bridges form between C265/C309 and C353/C396. N363, N428, N445, N448, and N479 each carry an N-linked (GlcNAc...) asparagine glycan. 2 cysteine pairs are disulfide-bonded: C442–C484 and C529–C571. N574 and N634 each carry an N-linked (GlcNAc...) asparagine glycan. C616 and C659 form a disulfide bridge. A helical transmembrane segment spans residues 688–708 (VAVGFGSCLAILILAICGLKL). The Cytoplasmic segment spans residues 709–847 (QRRWKRTQSQ…ENVDYVILKH (139 aa)). A phosphoserine mark is found at S725, S726, and S729. 2 consecutive short sequence motifs (ITIM motif) follow at residues 760–765 (ISYTTL) and 794–799 (VTYSVL). The residue at position 762 (Y762) is a Phosphotyrosine. 3 positions are modified to phosphotyrosine: Y807, Y822, and Y842. 2 consecutive short sequence motifs (ITIM motif) follow at residues 820 to 825 (IHYSEL) and 840 to 845 (VDYVIL).

This sequence belongs to the immunoglobulin superfamily. SIGLEC (sialic acid binding Ig-like lectin) family. Predominantly monomer of isoform CD22-beta. Also found as heterodimer of isoform CD22-beta and a shorter isoform. Interacts with PTPN6/SHP-1, LYN, SYK, PIK3R1/PIK3R2 and PLCG1 upon phosphorylation. Interacts with GRB2, INPP5D and SHC1 upon phosphorylation. May form a complex with INPP5D/SHIP, GRB2 and SHC1. Phosphorylation of Tyr-762, Tyr-807 and Tyr-822 are involved in binding to SYK, GRB2 and SYK, respectively. Phosphorylation of Tyr-842 is involved in binding to SYK, PLCG2 and PIK3R1/PIK3R2. Post-translationally, phosphorylated on tyrosine residues by LYN.

It is found in the cell membrane. Functionally, most highly expressed siglec (sialic acid-binding immunoglobulin-like lectin) on B-cells that plays a role in various aspects of B-cell biology including differentiation, antigen presentation, and trafficking to bone marrow. Binds to alpha 2,6-linked sialic acid residues of surface molecules such as CD22 itself, CD45 and IgM in a cis configuration. Can also bind to ligands on other cells as an adhesion molecule in a trans configuration. Acts as an inhibitory coreceptor on the surface of B-cells and inhibits B-cell receptor induced signaling, characterized by inhibition of the calcium mobilization and cellular activation. Mechanistically, the immunoreceptor tyrosine-based inhibitory motif domain is phosphorylated by the Src kinase LYN, which in turn leads to the recruitment of the protein tyrosine phosphatase 1/PTPN6, leading to the negative regulation of BCR signaling. If this negative signaling from is of sufficient strength, apoptosis of the B-cell can be induced. The polypeptide is B-cell receptor CD22 (Pan troglodytes (Chimpanzee)).